We begin with the raw amino-acid sequence, 200 residues long: Probable nicotinate-nucleotide adenylyltransferase (200 aa).

This sequence belongs to the NadD family.

It carries out the reaction nicotinate beta-D-ribonucleotide + ATP + H(+) = deamido-NAD(+) + diphosphate. The protein operates within cofactor biosynthesis; NAD(+) biosynthesis; deamido-NAD(+) from nicotinate D-ribonucleotide: step 1/1. Catalyzes the reversible adenylation of nicotinate mononucleotide (NaMN) to nicotinic acid adenine dinucleotide (NaAD). The chain is Probable nicotinate-nucleotide adenylyltransferase from Clostridium botulinum (strain Alaska E43 / Type E3).